Here is a 341-residue protein sequence, read N- to C-terminus: MTTVPCFIAGLPKAELHLHIEGTLEPAMMLRLAERNRQPPPFPDVETAEKAYRFTNLQSFLDIYYRSTEVLVTEEDFYDLTLAYLEKAASQKIGHAEIFFDPQAHTVRGIAFATVLRGMEEACREAHSRLGISTRLIMCILRHLSEQEGMTMLNEAVRWKRWITGIGLDSSERGNPPSKFHNLYREARREGFFLTAHAGEEGSAASVKETLDLLHVDRIDHGVRCMDDPALVKELVRRAVPLTVCPLSNVKLQVFGSMQEHNLKAMLEKGLMVTLNSDDPAYFGGYLNDNFTAAAEALDLSFSDIIRLAANSFNASMLSIVQKKIHLLELADYARGFAPGH.

His-17, His-19, and His-197 together coordinate Zn(2+). The active-site Proton donor is Glu-200. Asp-278 lines the Zn(2+) pocket. Asp-279 provides a ligand contact to substrate.

The protein belongs to the metallo-dependent hydrolases superfamily. Adenosine and AMP deaminases family. Adenine deaminase type 2 subfamily. Requires Zn(2+) as cofactor.

It catalyses the reaction adenine + H2O + H(+) = hypoxanthine + NH4(+). Its function is as follows. Catalyzes the hydrolytic deamination of adenine to hypoxanthine. Plays an important role in the purine salvage pathway and in nitrogen catabolism. This is Adenine deaminase from Chlorobium luteolum (strain DSM 273 / BCRC 81028 / 2530) (Pelodictyon luteolum).